Reading from the N-terminus, the 456-residue chain is Keratin, type I cuticular Ha8 (456 aa).

The interval 1–104 (MTSSYSSSSC…YGENTLNGHE (104 aa)) is head. The IF rod domain occupies 104–415 (EKETMQFLND…NLLESEDCKL (312 aa)). Positions 105-139 (KETMQFLNDRLANYLEKVRQLEQENAELEATLLER) are coil 1A. The segment at 140–150 (SKCHESTVCPD) is linker 1. Positions 151-251 (YQSYFHTIEE…HEQEVKILRS (101 aa)) are coil 1B. A linker 12 region spans residues 252–267 (QLGEKLRIELDIEPTI). Positions 268–411 (DLNRVLGEMR…ATYRNLLESE (144 aa)) are coil 2. Residues 412 to 456 (DCKLPCNPCSTSPSCVTAPCAPRPSCGPCTTCGPTCGASTTGSRF) are tail.

It belongs to the intermediate filament family.

In Homo sapiens (Human), this protein is Keratin, type I cuticular Ha8 (KRT38).